Reading from the N-terminus, the 483-residue chain is GDP-fucose protein O-fucosyltransferase 3 (483 aa).

Residues 1–8 lie on the Cytoplasmic side of the membrane; it reads MVRIPRRK. A helical; Signal-anchor for type II membrane protein membrane pass occupies residues 9 to 31; the sequence is LLPSCLCMTATVFLMVTVQVLVE. The Lumenal segment spans residues 32–483; the sequence is LGKFERKKFK…FWALVFKDSF (452 aa). The interval 45 to 64 is disordered; sequence LQDGQKDVEGDPKHLNPLPK. Residues Asn110, Asn168, and Asn318 are each glycosylated (N-linked (GlcNAc...) asparagine). An intrachain disulfide couples Cys389 to Cys392. N-linked (GlcNAc...) asparagine glycosylation is present at Asn468.

This sequence belongs to the glycosyltransferase 10 family.

The protein localises to the endoplasmic reticulum membrane. The catalysed reaction is L-threonyl-[protein] + GDP-beta-L-fucose = 3-O-(alpha-L-fucosyl)-L-threonyl-[protein] + GDP + H(+). The enzyme catalyses L-seryl-[protein] + GDP-beta-L-fucose = 3-O-(alpha-L-fucosyl)-L-seryl-[protein] + GDP + H(+). It participates in protein modification; protein glycosylation. Its function is as follows. Protein O-fucosyltransferase that specifically catalyzes O-fucosylation of serine or threonine residues in EMI domains of target proteins, such as MMRN1, MMRN2 and EMID1. Attaches fucose through an O-glycosidic linkage. O-fucosylation of EMI domain-containing proteins may be required for facilitating protein folding and secretion. May also show alpha-(1,3)-fucosyltransferase activity toward the innermost N-acetyl glucosamine (GlcNAc) residue in biantennary N-glycan acceptors. However, this was tested with a library of synthetic substrates and this activity is unsure in vivo. May be involved in biosynthesis of Lewis X-carrying biantennary N-glycans that regulate neuron stem cell self-renewal during brain development. The chain is GDP-fucose protein O-fucosyltransferase 3 (Fut10) from Rattus norvegicus (Rat).